A 433-amino-acid chain; its full sequence is Serine--tRNA ligase (433 aa).

L-serine is bound at residue 235-237 (TSE). ATP is bound at residue 266–268 (RSE). E289 serves as a coordination point for L-serine. 353-356 (EISS) lines the ATP pocket. S388 contacts L-serine.

It belongs to the class-II aminoacyl-tRNA synthetase family. Type-1 seryl-tRNA synthetase subfamily. Homodimer. The tRNA molecule binds across the dimer.

It is found in the cytoplasm. It catalyses the reaction tRNA(Ser) + L-serine + ATP = L-seryl-tRNA(Ser) + AMP + diphosphate + H(+). The catalysed reaction is tRNA(Sec) + L-serine + ATP = L-seryl-tRNA(Sec) + AMP + diphosphate + H(+). Its pathway is aminoacyl-tRNA biosynthesis; selenocysteinyl-tRNA(Sec) biosynthesis; L-seryl-tRNA(Sec) from L-serine and tRNA(Sec): step 1/1. Catalyzes the attachment of serine to tRNA(Ser). Is also able to aminoacylate tRNA(Sec) with serine, to form the misacylated tRNA L-seryl-tRNA(Sec), which will be further converted into selenocysteinyl-tRNA(Sec). The sequence is that of Serine--tRNA ligase from Burkholderia cenocepacia (strain HI2424).